The following is a 335-amino-acid chain: Holliday junction branch migration complex subunit RuvB (335 aa).

The large ATPase domain (RuvB-L) stretch occupies residues Val-4–Tyr-184. ATP-binding positions include Ile-23, Arg-24, Gly-65, Lys-68, Thr-69, Thr-70, Glu-131 to Tyr-133, Arg-174, Tyr-184, and Arg-221. Thr-69 serves as a coordination point for Mg(2+). The segment at Ser-185 to Asp-255 is small ATPAse domain (RuvB-S). The tract at residues Leu-258–Lys-335 is head domain (RuvB-H). Arg-294, Arg-313, and Arg-318 together coordinate DNA.

The protein belongs to the RuvB family. Homohexamer. Forms an RuvA(8)-RuvB(12)-Holliday junction (HJ) complex. HJ DNA is sandwiched between 2 RuvA tetramers; dsDNA enters through RuvA and exits via RuvB. An RuvB hexamer assembles on each DNA strand where it exits the tetramer. Each RuvB hexamer is contacted by two RuvA subunits (via domain III) on 2 adjacent RuvB subunits; this complex drives branch migration. In the full resolvosome a probable DNA-RuvA(4)-RuvB(12)-RuvC(2) complex forms which resolves the HJ.

It is found in the cytoplasm. The catalysed reaction is ATP + H2O = ADP + phosphate + H(+). The RuvA-RuvB-RuvC complex processes Holliday junction (HJ) DNA during genetic recombination and DNA repair, while the RuvA-RuvB complex plays an important role in the rescue of blocked DNA replication forks via replication fork reversal (RFR). RuvA specifically binds to HJ cruciform DNA, conferring on it an open structure. The RuvB hexamer acts as an ATP-dependent pump, pulling dsDNA into and through the RuvAB complex. RuvB forms 2 homohexamers on either side of HJ DNA bound by 1 or 2 RuvA tetramers; 4 subunits per hexamer contact DNA at a time. Coordinated motions by a converter formed by DNA-disengaged RuvB subunits stimulates ATP hydrolysis and nucleotide exchange. Immobilization of the converter enables RuvB to convert the ATP-contained energy into a lever motion, pulling 2 nucleotides of DNA out of the RuvA tetramer per ATP hydrolyzed, thus driving DNA branch migration. The RuvB motors rotate together with the DNA substrate, which together with the progressing nucleotide cycle form the mechanistic basis for DNA recombination by continuous HJ branch migration. Branch migration allows RuvC to scan DNA until it finds its consensus sequence, where it cleaves and resolves cruciform DNA. This Histophilus somni (strain 129Pt) (Haemophilus somnus) protein is Holliday junction branch migration complex subunit RuvB.